Here is a 148-residue protein sequence, read N- to C-terminus: Large ribosomal subunit protein bL9 (148 aa).

This sequence belongs to the bacterial ribosomal protein bL9 family.

In terms of biological role, binds to the 23S rRNA. The protein is Large ribosomal subunit protein bL9 of Staphylococcus aureus (strain Newman).